The chain runs to 310 residues: Sporozoite surface protein P36 (310 aa).

The signal sequence occupies residues 1-24 (MRKALYSLLFYMCICLYIYTPVFM). 6-Cys domains lie at 25–157 (ANLK…IKKT) and 168–309 (YIKG…STKA). 6 disulfide bridges follow: cysteine 38–cysteine 48, cysteine 62–cysteine 137, cysteine 80–cysteine 135, cysteine 172–cysteine 196, cysteine 210–cysteine 291, and cysteine 227–cysteine 289. Asparagine 72, asparagine 114, and asparagine 118 each carry an N-linked (GlcNAc...) asparagine glycan. N-linked (GlcNAc...) asparagine glycosylation is present at asparagine 290.

The protein localises to the cell surface. It is found in the cell membrane. Involved in sporozoite infection of hepatocytes and replication therein. This Plasmodium yoelii yoelii protein is Sporozoite surface protein P36 (P36).